A 262-amino-acid chain; its full sequence is Acyl-[acyl-carrier-protein]--UDP-N-acetylglucosamine O-acyltransferase (262 aa).

The protein belongs to the transferase hexapeptide repeat family. LpxA subfamily. As to quaternary structure, homotrimer.

It is found in the cytoplasm. It carries out the reaction a (3R)-hydroxyacyl-[ACP] + UDP-N-acetyl-alpha-D-glucosamine = a UDP-3-O-[(3R)-3-hydroxyacyl]-N-acetyl-alpha-D-glucosamine + holo-[ACP]. It functions in the pathway glycolipid biosynthesis; lipid IV(A) biosynthesis; lipid IV(A) from (3R)-3-hydroxytetradecanoyl-[acyl-carrier-protein] and UDP-N-acetyl-alpha-D-glucosamine: step 1/6. Involved in the biosynthesis of lipid A, a phosphorylated glycolipid that anchors the lipopolysaccharide to the outer membrane of the cell. The sequence is that of Acyl-[acyl-carrier-protein]--UDP-N-acetylglucosamine O-acyltransferase from Campylobacter concisus (strain 13826).